The chain runs to 718 residues: GMP synthase [glutamine-hydrolyzing] (718 aa).

The Glutamine amidotransferase type-1 domain occupies 43–247; sequence VIVILDAGSQ…LIDICGCSAN (205 aa). Catalysis depends on for GATase activity residues cysteine 128, histidine 221, and glutamate 223. The GMPS ATP-PPase domain occupies 248–457; sequence YTLDDREQQA…LGLSDSLVWR (210 aa). ATP is bound at residue 275 to 281; the sequence is SGGVDST.

Homodimer.

The catalysed reaction is XMP + L-glutamine + ATP + H2O = GMP + L-glutamate + AMP + diphosphate + 2 H(+). It functions in the pathway purine metabolism; GMP biosynthesis; GMP from XMP (L-Gln route): step 1/1. The chain is GMP synthase [glutamine-hydrolyzing] (guaA) from Dictyostelium discoideum (Social amoeba).